A 200-amino-acid polypeptide reads, in one-letter code: uncharacterized protein (200 aa).

This is an uncharacterized protein from Treponema pallidum (strain Nichols).